We begin with the raw amino-acid sequence, 382 residues long: Fimbrial usher domain-containing protein YdeT (382 aa).

This is Fimbrial usher domain-containing protein YdeT (ydeT) from Escherichia coli O157:H7.